Reading from the N-terminus, the 571-residue chain is Proline--tRNA ligase (571 aa).

It belongs to the class-II aminoacyl-tRNA synthetase family. ProS type 1 subfamily. As to quaternary structure, homodimer.

The protein localises to the cytoplasm. It catalyses the reaction tRNA(Pro) + L-proline + ATP = L-prolyl-tRNA(Pro) + AMP + diphosphate. Catalyzes the attachment of proline to tRNA(Pro) in a two-step reaction: proline is first activated by ATP to form Pro-AMP and then transferred to the acceptor end of tRNA(Pro). As ProRS can inadvertently accommodate and process non-cognate amino acids such as alanine and cysteine, to avoid such errors it has two additional distinct editing activities against alanine. One activity is designated as 'pretransfer' editing and involves the tRNA(Pro)-independent hydrolysis of activated Ala-AMP. The other activity is designated 'posttransfer' editing and involves deacylation of mischarged Ala-tRNA(Pro). The misacylated Cys-tRNA(Pro) is not edited by ProRS. This chain is Proline--tRNA ligase, found in Photobacterium profundum (strain SS9).